Reading from the N-terminus, the 403-residue chain is Aspartic protease PEP1 (403 aa).

The N-terminal stretch at 1–20 (MVQISQIGAVLAVCSTLTVA) is a signal peptide. A propeptide spans 21–67 (APTKGKARFNVPQVAVPMKAVHHPAVAYARALHKFGMKVPKAVSDAA) (activation peptide). In terms of domain architecture, Peptidase A1 spans 82–400 (YVTQVTVGQG…DTEGPRIGFA (319 aa)). Aspartate 98 is an active-site residue. N-linked (GlcNAc...) asparagine glycans are attached at residues asparagine 159 and asparagine 270. The active site involves aspartate 293. A disulfide bridge links cysteine 329 with cysteine 361.

Belongs to the peptidase A1 family.

It localises to the secreted. The catalysed reaction is Hydrolysis of proteins with broad specificity. Generally favors hydrophobic residues in P1 and P1', but also accepts Lys in P1, which leads to activation of trypsinogen. Does not clot milk.. Secreted aspartic endopeptidase that allows assimilation of proteinaceous substrates. Can catalyze hydrolysis of the major structural proteins of basement membrane, elastin, collagen, and laminin. Thought to play a significant role in virulence. The chain is Aspartic protease PEP1 (PEP1) from Arthroderma benhamiae (strain ATCC MYA-4681 / CBS 112371) (Trichophyton mentagrophytes).